Here is a 443-residue protein sequence, read N- to C-terminus: Dihydroorotase (443 aa).

Zn(2+) contacts are provided by H80 and H82. Residues 82–84 (HFR) and N114 each bind substrate. The Zn(2+) site is built by D170, H197, and H251. N297 contributes to the substrate binding site. Zn(2+) is bound at residue D324. Residue D324 is part of the active site. Residues H328 and 342–343 (FG) contribute to the substrate site.

The protein belongs to the metallo-dependent hydrolases superfamily. DHOase family. Class I DHOase subfamily. The cofactor is Zn(2+).

It catalyses the reaction (S)-dihydroorotate + H2O = N-carbamoyl-L-aspartate + H(+). The protein operates within pyrimidine metabolism; UMP biosynthesis via de novo pathway; (S)-dihydroorotate from bicarbonate: step 3/3. Its function is as follows. Catalyzes the reversible cyclization of carbamoyl aspartate to dihydroorotate. The protein is Dihydroorotase of Wolbachia sp. subsp. Brugia malayi (strain TRS).